A 161-amino-acid chain; its full sequence is Large ribosomal subunit protein eL21 (161 aa).

Belongs to the eukaryotic ribosomal protein eL21 family.

The chain is Large ribosomal subunit protein eL21 (RPL21) from Cyanophora paradoxa.